The primary structure comprises 546 residues: Immunoglobulin-like domain-containing receptor 1 (546 aa).

A signal peptide spans 1 to 23; that stretch reads MAWPKLPAPWLLLCTWLPAGCLS. In terms of domain architecture, Ig-like V-type spans 24 to 162; that stretch reads LLVTVQHTER…TSGDPDKEVK (139 aa). Residues 24 to 167 are Extracellular-facing; it reads LLVTVQHTER…DKEVKLIVLH (144 aa). Residues Cys45 and Cys145 are joined by a disulfide bond. The chain crosses the membrane as a helical span at residues 168–188; it reads WLTVIFIILGALLLLLLIGVC. Residues 189-546 lie on the Cytoplasmic side of the membrane; the sequence is WCQCCPQYCC…SSHSGRSVVI (358 aa). The interval 399-546 is disordered; that stretch reads WSGRHRSSRL…SSHSGRSVVI (148 aa). Over residues 442–457 the composition is skewed to basic and acidic residues; that stretch reads RCQERPRRPSPRESTQ. Basic residues predominate over residues 458–467; the sequence is RHGRRRRHRS. 2 positions are modified to phosphoserine: Ser499 and Ser501. Positions 527-539 are enriched in basic and acidic residues; sequence GSVERRSEKDSSH.

It belongs to the immunoglobulin superfamily. LISCH7 family. As to quaternary structure, homooligomer. Interacts with MARVELD2 and OCLN; the interaction is required to recruit MARVELD2 to tricellular contacts. Interacts (via C-terminus) with TRA2A, TRA2B and SRSF1. Interacts with PLSCR1. As to expression, mainly expressed in prostate and to a lower extent in testis, pancreas, kidney, heart and liver.

The protein resides in the cell membrane. The protein localises to the cell junction. It localises to the tight junction. Its subcellular location is the cytoplasm. It is found in the cytosol. Maintains epithelial barrier function by recruiting MARVELD2/tricellulin to tricellular tight junctions (tTJs). Crucial for normal hearing by maintaining the structural and functional integrity of tTJs, which are critical for the survival of auditory neurosensory HCs. Mediates fatty acids and lipoproteins-stimulated CCK/cholecystokinin secretion in the small intestine. In the inner ear, may regulate alternative pre-mRNA splicing via binding to TRA2A, TRA2B and SRSF1. In terms of biological role, (Microbial infection) Promotes influenza virus infection by inhibiting viral nucleoprotein NP binding to PLSCR1 and thereby PLSCR1-mediated antiviral activity. The sequence is that of Immunoglobulin-like domain-containing receptor 1 from Homo sapiens (Human).